Reading from the N-terminus, the 264-residue chain is 3-methyl-2-oxobutanoate hydroxymethyltransferase (264 aa).

2 residues coordinate Mg(2+): Asp-45 and Asp-84. 3-methyl-2-oxobutanoate is bound by residues Asp-45–Ser-46, Asp-84, and Lys-112. Residue Glu-114 participates in Mg(2+) binding. Residue Glu-181 is the Proton acceptor of the active site.

This sequence belongs to the PanB family. Homodecamer; pentamer of dimers. Mg(2+) serves as cofactor.

It localises to the cytoplasm. The enzyme catalyses 3-methyl-2-oxobutanoate + (6R)-5,10-methylene-5,6,7,8-tetrahydrofolate + H2O = 2-dehydropantoate + (6S)-5,6,7,8-tetrahydrofolate. Its pathway is cofactor biosynthesis; (R)-pantothenate biosynthesis; (R)-pantoate from 3-methyl-2-oxobutanoate: step 1/2. Functionally, catalyzes the reversible reaction in which hydroxymethyl group from 5,10-methylenetetrahydrofolate is transferred onto alpha-ketoisovalerate to form ketopantoate. This Pectobacterium atrosepticum (strain SCRI 1043 / ATCC BAA-672) (Erwinia carotovora subsp. atroseptica) protein is 3-methyl-2-oxobutanoate hydroxymethyltransferase.